Reading from the N-terminus, the 257-residue chain is High affinity immunoglobulin epsilon receptor subunit alpha (257 aa).

The first 25 residues, Met1–Ala25, serve as a signal peptide directing secretion. The Extracellular portion of the chain corresponds to Val26 to Gln205. Ig-like domains follow at residues Pro30 to Ser110 and Asp111 to Thr193. N-linked (GlcNAc...) asparagine glycosylation is found at Asn46, Asn67, Asn75, Asn99, Asn160, Asn165, and Asn191. Cysteines 51 and 93 form a disulfide. A disulfide bond links Cys132 and Cys176. A helical membrane pass occupies residues Phe206–Ile224. At Ser225–Asn257 the chain is on the cytoplasmic side.

As to quaternary structure, tetramer of an alpha chain, a beta chain, and two disulfide linked gamma chains. Interacts with IGHE (via CH3 region). As to expression, expressed in eosinophils.

Its subcellular location is the cell membrane. Its function is as follows. High-affinity receptor for immunoglobulin epsilon/IgE. Mediates IgE effector functions in myeloid cells. Upon IgE binding and antigen/allergen cross-linking initiates signaling pathways that lead to myeloid cell activation and differentiation. On mast cells, basophils and eosinophils stimulates the secretion of vasoactive amines, lipid mediators and cytokines that contribute to inflammatory response, tissue remodeling and cytotoxicity against microbes. Triggers the immediate hypersensitivity response to allergens as a host defense mechanism against helminth parasites, pathogenic bacteria and venom toxicity. When dysregulated, it can elicit harmful life-threatening allergic and anaphylactic reactions. The polypeptide is High affinity immunoglobulin epsilon receptor subunit alpha (FCER1A) (Homo sapiens (Human)).